A 919-amino-acid polypeptide reads, in one-letter code: UPF0182 protein SUN_1015 (919 aa).

7 consecutive transmembrane segments (helical) span residues 8 to 28 (IIITALAIFTIYLFSLFVDYY), 51 to 71 (ILSFILFFLIFILFSGIHIHF), 102 to 122 (AVAWLWAVIILFFAIVMGSYA), 158 to 178 (VYQFVVSWYLFMVVITFIGVL), 207 to 227 (LTAFFALGVSALYFIKLYNIL), 246 to 266 (IPAYWTILVMSLIITILLFFY), and 274 to 294 (VIVSALGLWVLVWAGFVWIYP).

It belongs to the UPF0182 family.

The protein resides in the cell membrane. In Sulfurovum sp. (strain NBC37-1), this protein is UPF0182 protein SUN_1015.